The chain runs to 152 residues: Superoxide dismutase [Cu-Zn] (152 aa).

Cu cation is bound by residues His-45, His-47, and His-62. A disulfide bridge connects residues Cys-56 and Cys-145. Residues His-62, His-70, His-79, and Asp-82 each contribute to the Zn(2+) site. Position 119 (His-119) interacts with Cu cation.

This sequence belongs to the Cu-Zn superoxide dismutase family. In terms of assembly, homodimer. Requires Cu cation as cofactor. Zn(2+) serves as cofactor.

Its subcellular location is the cytoplasm. The catalysed reaction is 2 superoxide + 2 H(+) = H2O2 + O2. Functionally, destroys radicals which are normally produced within the cells and which are toxic to biological systems. The chain is Superoxide dismutase [Cu-Zn] (SODCC) from Carica papaya (Papaya).